We begin with the raw amino-acid sequence, 610 residues long: Myosin light chain kinase 2, skeletal/cardiac muscle (610 aa).

2 disordered regions span residues 1–168 (MATE…HSPS) and 196–240 (VSET…DTSQ). N-acetylalanine is present on A2. Basic and acidic residues-rich tracts occupy residues 32-63 (SEKEPSLPDTEKDLGPTNTKKDPGAPDPKKNP) and 70-82 (KTPEAPGPEKKGD). The segment covering 94-109 (SGEGDGGGGPAEGGTG) has biased composition (gly residues). Basic and acidic residues predominate over residues 141–157 (GEAKAGKKAAECREAGR). Residues S160, S166, and S168 each carry the phosphoserine modification. The region spanning 299–554 (MNSKEALGGG…AEQCLAHPWL (256 aa)) is the Protein kinase domain. ATP is bound by residues 305-313 (LGGGKFGAV) and K328. D420 serves as the catalytic Proton acceptor. T459 is subject to Phosphothreonine. The segment at 588–600 (IAVSAANRFKKIS) is calmodulin-binding.

Belongs to the protein kinase superfamily. CAMK Ser/Thr protein kinase family. In terms of assembly, may interact with centrin.

It is found in the cytoplasm. The enzyme catalyses L-seryl-[myosin light chain] + ATP = O-phospho-L-seryl-[myosin light chain] + ADP + H(+). It catalyses the reaction L-threonyl-[myosin light chain] + ATP = O-phospho-L-threonyl-[myosin light chain] + ADP + H(+). Its function is as follows. Implicated in the level of global muscle contraction and cardiac function. Phosphorylates a specific serine in the N-terminus of a myosin light chain. The protein is Myosin light chain kinase 2, skeletal/cardiac muscle (Mylk2) of Rattus norvegicus (Rat).